The primary structure comprises 147 residues: Deoxyuridine 5'-triphosphate nucleotidohydrolase (147 aa).

Arginine 24 contributes to the Mg(2+) binding site. Residues 68–70 (PRS), 82–85 (GVID), tyrosine 88, glycine 93, isoleucine 95, and arginine 111 contribute to the dUTP site.

It belongs to the dUTPase family. Requires Mg(2+) as cofactor.

The catalysed reaction is dUTP + H2O = dUMP + diphosphate + H(+). Functionally, this enzyme is involved in nucleotide metabolism: it produces dUMP, the immediate precursor of thymidine nucleotides and it decreases the intracellular concentration of dUTP so that uracil cannot be incorporated into DNA. The polypeptide is Deoxyuridine 5'-triphosphate nucleotidohydrolase (OPG046) (Bos taurus (Bovine)).